The following is a 621-amino-acid chain: DDB1- and CUL4-associated factor 10 homolog (621 aa).

WD repeat units lie at residues 46–85, 89–127, 131–170, and 176–215; these read GRTGAIFNLEFNADGNVVVAATERKCVLVFDAITQKEIFK, AHTDSVNCIKFFDERLFATGSDDFTVALWDLRNMKQKLR, GHSNWVKNIEYSSKDKLLVSSGFDGSIFTWDINSQTEQGL, and FHASGLMRCRISPTGDKLVLCTSGGYIMIIHHLDLTTLHK. 2 disordered regions span residues 305 to 349 and 437 to 483; these read VRSE…PRQA and LMGS…TTVR. A Phosphoserine modification is found at S307. The segment covering 324–342 has biased composition (polar residues); sequence STTLASRSSLNESQDQDTV. Over residues 454–478 the composition is skewed to low complexity; the sequence is ESNQSSSSSSSSSSSSSSSSSSNNS. 2 positions are modified to phosphoserine: S494 and S497. The stretch at 588 to 621 is one WD 5 repeat; sequence EHQDVVLCAKFSPREPLLVTGCNGGEVTWYRPNL.

It belongs to the WD repeat DCAF10 family.

The sequence is that of DDB1- and CUL4-associated factor 10 homolog from Drosophila melanogaster (Fruit fly).